The primary structure comprises 1002 residues: Copper-transporting ATPase HMA5 (1002 aa).

A compositionally biased stretch (low complexity) spans 32–48 (RPRYPSMPRRPRSAAVA). The interval 32-63 (RPRYPSMPRRPRSAAVAGEGGEGGGGGGDGDL) is disordered. The segment covering 49–60 (GEGGEGGGGGGD) has biased composition (gly residues). HMA domains lie at 75 to 141 (KVAV…FEAK), 153 to 219 (LVCR…FEAI), and 228 to 294 (SRID…SGDL). 4 residues coordinate Cu(+): cysteine 86, cysteine 89, cysteine 164, and cysteine 167. Transmembrane regions (helical) follow at residues 320 to 340 (FLWS…FMYI), 354 to 374 (MMSI…FVIG), 392 to 412 (MDVL…YSIL), 425 to 445 (FFET…LEIL), 585 to 605 (VFVP…FLAG), 624 to 644 (LALQ…LGLA), 943 to 963 (YVWA…VLFP), and 972 to 992 (WVAG…SLLL).

The protein belongs to the cation transport ATPase (P-type) (TC 3.A.3) family. Type IB subfamily. In terms of tissue distribution, expressed in root pericycle cells, xylem region of diffuse vascular bundles in the first node, and vascular tissues of peduncle, rachis and husk.

The protein localises to the cell membrane. It catalyses the reaction Cu(+)(in) + ATP + H2O = Cu(+)(out) + ADP + phosphate + H(+). Copper (Cu) transporter that plays an essential role in promoting translocation of Cu from roots to shoots. Involved in loading Cu to the xylem of the roots and other organs, including panicles. The protein is Copper-transporting ATPase HMA5 of Oryza sativa subsp. japonica (Rice).